Consider the following 934-residue polypeptide: ATP-dependent RNA helicase dbp-10 (934 aa).

Positions 21–43 (LFNNDSDFEDNSSKHHTKKGAVT) are disordered. A Q motif motif is present at residues 99-127 (GGFQAMGLNAHLLRAITRKGFSVPTPIQR). In terms of domain architecture, Helicase ATP-binding spans 130-302 (IPLILERKDV…RAGLQEPSLV (173 aa)). 143 to 150 (ARTGSGKT) provides a ligand contact to ATP. Positions 250-253 (DEAD) match the DEAD box motif. Disordered stretches follow at residues 343–370 (GPPE…NPKE), 613–722 (ELGP…FQDP), and 851–934 (GAQP…RQKR). The 155-residue stretch at 359–513 (KRKREYRPNP…KNPSFAADVV (155 aa)) folds into the Helicase C-terminal domain. Composition is skewed to acidic residues over residues 644-654 (DEDDEDVDMED) and 662-700 (EETN…DSEM). The span at 864-926 (EKAPKDADKF…VAEKKREKNA (63 aa)) shows a compositional bias: basic and acidic residues.

It belongs to the DEAD box helicase family. DDX54/DBP10 subfamily.

The protein resides in the nucleus. Its subcellular location is the nucleolus. It carries out the reaction ATP + H2O = ADP + phosphate + H(+). ATP-binding RNA helicase involved in the biogenesis of 60S ribosomal subunits and is required for the normal formation of 25S and 5.8S rRNAs. This is ATP-dependent RNA helicase dbp-10 (dbp-10) from Neurospora crassa (strain ATCC 24698 / 74-OR23-1A / CBS 708.71 / DSM 1257 / FGSC 987).